A 492-amino-acid chain; its full sequence is Probable endopolygalacturonase D (492 aa).

The signal sequence occupies residues 1-16 (MKRSALILSFLPLVFG). An intrachain disulfide couples cysteine 151 to cysteine 166. 4 PbH1 repeats span residues 216–238 (GTSVTITGVEGHVIDGNGAAYWD), 258–280 (MYNSRIENLYIQNWPVHCFEIES), 281–319 (TEHLTVSGLTLNNSAGDAANSKSDGDPAAHNSDGFDIKE), and 320–341 (SSYFTLENTWVHNQDDCVAVTS). An N-linked (GlcNAc...) asparagine glycan is attached at asparagine 292. Aspartate 334 serves as the catalytic Proton donor. Cysteines 336 and 352 form a disulfide. The active site involves histidine 356. PbH1 repeat units lie at residues 371 to 392 (VNGVTFSNSQVISSQNGCRIKT), 400 to 422 (VYNIRYENITLSDISDYGIDVQQ), and 434 to 478 (TNGV…SITG). N-linked (GlcNAc...) asparagine glycosylation is found at asparagine 407 and asparagine 441. 2 cysteine pairs are disulfide-bonded: cysteine 461–cysteine 466 and cysteine 484–cysteine 491.

The protein belongs to the glycosyl hydrolase 28 family.

Its subcellular location is the secreted. It carries out the reaction (1,4-alpha-D-galacturonosyl)n+m + H2O = (1,4-alpha-D-galacturonosyl)n + (1,4-alpha-D-galacturonosyl)m.. Functionally, involved in maceration and soft-rotting of plant tissue. Hydrolyzes the 1,4-alpha glycosidic bonds of de-esterified pectate in the smooth region of the plant cell wall. This chain is Probable endopolygalacturonase D (pgaD), found in Aspergillus flavus (strain ATCC 200026 / FGSC A1120 / IAM 13836 / NRRL 3357 / JCM 12722 / SRRC 167).